The following is a 123-amino-acid chain: Small ribosomal subunit protein uS12cz/uS12cy (123 aa).

This sequence belongs to the universal ribosomal protein uS12 family. Part of the 30S ribosomal subunit.

The protein localises to the plastid. It localises to the chloroplast. With S4 and S5 plays an important role in translational accuracy. Located at the interface of the 30S and 50S subunits. The protein is Small ribosomal subunit protein uS12cz/uS12cy (rps12-A) of Nymphaea alba (White water-lily).